Consider the following 1216-residue polypeptide: Sodium/potassium/calcium exchanger 1 (1216 aa).

The Extracellular segment spans residues 1-446 (MGKLIRMGAQ…DLFSVEERRQ (446 aa)). Residues 94–196 (EATAGRDGTP…KYSPSPLGRM (103 aa)) form a disordered region. Polar residues-rich tracts occupy residues 110-135 (NTPS…TPTG) and 144-166 (SATP…SYTR). Residues Asn290 and Asn303 are each glycosylated (N-linked (GlcNAc...) asparagine). A helical transmembrane segment spans residues 447 to 467 (GWVVLHIFGMMYVFVALAIVC). Residues 468 to 491 (DEYFVPALGVITDKLQISEDVAGA) lie on the Cytoplasmic side of the membrane. One copy of the Alpha-1 repeat lies at 488–528 (VAGATFMAAGGSAPELFTSLIGVFISHSNVGIGTIVGSAVF). The chain crosses the membrane as a helical span at residues 492–512 (TFMAAGGSAPELFTSLIGVFI). Residues 513–518 (SHSNVG) are Extracellular-facing. The chain crosses the membrane as a helical span at residues 519-539 (IGTIVGSAVFNILFVIGTCAL). The Cytoplasmic segment spans residues 540–557 (FSREILNLTWWPLFRDIT). A helical membrane pass occupies residues 558 to 578 (FYIFDLMMLILFFLDSLIAWW). A topological domain (extracellular) is located at residue Glu579. The helical transmembrane segment at 580–600 (SVLLLLAYAFYVFTMKWNQQL) threads the bilayer. Residues 601-1024 (ELWVKEQLNK…SLEWPETRRK (424 aa)) are Cytoplasmic-facing. Ser652 bears the Phosphoserine mark. The interval 677–1018 (GEARPSKDKE…ENEQPLSLEW (342 aa)) is disordered. A compositionally biased stretch (basic and acidic residues) spans 702 to 712 (AESKPEEEPAK). Thr717 carries the phosphothreonine modification. Residues 796 to 811 (DEDEGEIQAEGGEVKG) form a 1; approximate repeat. An 8 X 17 AA tandem repeats of D-E-D-E-G-E-I-Q-A-G-E-[GA]-G-E-V-[EK]-G region spans residues 796-928 (DEDEGEIQAE…QAGEAGEVEG (133 aa)). 6 repeat units span residues 812 to 828 (DEDE…EVEG), 829 to 845 (DEDE…EVEG), 846 to 862 (DEDE…EVEG), 863 to 879 (DEDE…EVEG), 880 to 896 (DEDE…EVEG), and 897 to 913 (DEDE…EVKG). Composition is skewed to acidic residues over residues 824–834 (GEVEGDEDEGE), 841–851 (GEVEGDEDEGE), 858–868 (GEVEGDEDEGE), 875–885 (GEVEGDEDEGE), 892–902 (GEVEGDEDEGE), 924–941 (GEVE…DEGE), and 981–1011 (GDSE…EENE). Residues 914-928 (DEGEIQAGEAGEVEG) form an 8; approximate repeat. Residues 1025 to 1045 (QAIYLFLLPIVFPLWLTVPDV) traverse the membrane as a helical segment. Residues 1046 to 1052 (RRLEAKK) lie on the Extracellular side of the membrane. Residues 1053-1073 (FFVITFLGSILWIAMFSYLMV) form a helical membrane-spanning segment. Topologically, residues 1074-1088 (WWAHQVGETIGISEE) are cytoplasmic. Residues 1089–1109 (IMGLTILAAGTSIPDLITSVI) form a helical membrane-spanning segment. An Alpha-2 repeat occupies 1096-1127 (AAGTSIPDLITSVIVARKGLGDMAVSSSVGSN). At 1110–1127 (VARKGLGDMAVSSSVGSN) the chain is on the extracellular side. The chain crosses the membrane as a helical span at residues 1128-1148 (IFDITVGLPLPWMLFSLINGL). Residues 1149–1157 (QPVAVSSNG) lie on the Cytoplasmic side of the membrane. Residues 1158–1178 (LFCAIVLLFLMLLFVISSIAL) form a helical membrane-spanning segment. Residues 1179–1185 (CKWRMNK) are Extracellular-facing. Residues 1186–1206 (ILGFTMFLLYFVFLIISVMLE) traverse the membrane as a helical segment. Residues 1207–1216 (DRIISCPVSV) lie on the Cytoplasmic side of the membrane.

This sequence belongs to the Ca(2+):cation antiporter (CaCA) (TC 2.A.19) family. SLC24A subfamily. The uncleaved signal sequence is required for efficient membrane targeting and proper membrane integration and topology. In terms of processing, glycosylated. Retina.

The protein resides in the cell membrane. It carries out the reaction Ca(2+)(out) + K(+)(out) + 4 Na(+)(in) = Ca(2+)(in) + K(+)(in) + 4 Na(+)(out). Its function is as follows. Calcium, potassium:sodium antiporter that transports 1 Ca(2+) and 1 K(+) in exchange for 4 Na(+). Critical component of the visual transduction cascade, controlling the calcium concentration of outer segments during light and darkness. Light causes a rapid lowering of cytosolic free calcium in the outer segment of both retinal rod and cone photoreceptors and the light-induced lowering of calcium is caused by extrusion via this protein which plays a key role in the process of light adaptation. In Bos taurus (Bovine), this protein is Sodium/potassium/calcium exchanger 1 (SLC24A1).